A 631-amino-acid chain; its full sequence is ATP-dependent zinc metalloprotease FtsH (631 aa).

The Cytoplasmic segment spans residues 1–5 (MKKSN). A helical membrane pass occupies residues 6-26 (PWFVFFWITLLVIVLMFINFA). Residues 27 to 102 (RQGGNEVELE…LEFSATEKSG (76 aa)) are Periplasmic-facing. A helical membrane pass occupies residues 103–123 (WLGSLLLNWGPVVLLILFCFW). At 124–631 (MMRGMSMGNK…KVINEKVIIS (508 aa)) the chain is on the cytoplasmic side. 196-203 (GSPGTGKT) provides a ligand contact to ATP. Residue histidine 418 participates in Zn(2+) binding. The active site involves glutamate 419. Zn(2+) contacts are provided by histidine 422 and aspartate 494.

The protein in the central section; belongs to the AAA ATPase family. It in the C-terminal section; belongs to the peptidase M41 family. As to quaternary structure, homohexamer. It depends on Zn(2+) as a cofactor.

The protein resides in the cell inner membrane. Its function is as follows. Acts as a processive, ATP-dependent zinc metallopeptidase for both cytoplasmic and membrane proteins. Plays a role in the quality control of integral membrane proteins. The polypeptide is ATP-dependent zinc metalloprotease FtsH (Endomicrobium trichonymphae).